Reading from the N-terminus, the 199-residue chain is ATP synthase subunit a (199 aa).

The next 5 helical transmembrane spans lie at 2 to 22 (NQVY…LFYF), 53 to 73 (VISV…YFTY), 80 to 100 (MVEF…LTFI), 141 to 161 (LTVN…GLEL), and 169 to 189 (WLSI…SYIF).

The protein belongs to the ATPase A chain family. As to quaternary structure, F-type ATPases have 2 components, CF(1) - the catalytic core - and CF(0) - the membrane proton channel. CF(1) has five subunits: alpha(3), beta(3), gamma(1), delta(1), epsilon(1). CF(0) has three main subunits: a, b and c.

The protein localises to the mitochondrion inner membrane. Functionally, mitochondrial membrane ATP synthase (F(1)F(0) ATP synthase or Complex V) produces ATP from ADP in the presence of a proton gradient across the membrane which is generated by electron transport complexes of the respiratory chain. F-type ATPases consist of two structural domains, F(1) - containing the extramembraneous catalytic core and F(0) - containing the membrane proton channel, linked together by a central stalk and a peripheral stalk. During catalysis, ATP synthesis in the catalytic domain of F(1) is coupled via a rotary mechanism of the central stalk subunits to proton translocation. Key component of the proton channel; it may play a direct role in the translocation of protons across the membrane. This is ATP synthase subunit a (atp6) from Caenorhabditis briggsae.